The primary structure comprises 142 residues: uncharacterized protein (142 aa).

This is an uncharacterized protein from Saccharomyces cerevisiae (strain ATCC 204508 / S288c) (Baker's yeast).